Reading from the N-terminus, the 335-residue chain is DNA-directed RNA polymerase subunit alpha (335 aa).

The alpha N-terminal domain (alpha-NTD) stretch occupies residues M1–E233. The segment at K263–R335 is alpha C-terminal domain (alpha-CTD).

It belongs to the RNA polymerase alpha chain family. In plastids the minimal PEP RNA polymerase catalytic core is composed of four subunits: alpha, beta, beta', and beta''. When a (nuclear-encoded) sigma factor is associated with the core the holoenzyme is formed, which can initiate transcription.

It is found in the plastid. It localises to the chloroplast. It catalyses the reaction RNA(n) + a ribonucleoside 5'-triphosphate = RNA(n+1) + diphosphate. Its function is as follows. DNA-dependent RNA polymerase catalyzes the transcription of DNA into RNA using the four ribonucleoside triphosphates as substrates. The sequence is that of DNA-directed RNA polymerase subunit alpha from Spinacia oleracea (Spinach).